Reading from the N-terminus, the 1127-residue chain is Disease resistance protein RPS6 (1127 aa).

The residue at position 1 (M1) is an N-acetylmethionine. The region spanning 12–176 (WSYHVFPSFS…EIANDILGKM (165 aa)) is the TIR domain. E87 is a catalytic residue. Residues 191–452 (EDHITKMSSL…HIACIFNGEK (262 aa)) form the NB-ARC domain. 11 LRR repeats span residues 197–221 (MSSLLHLESEEVRMVGIWGPSGIGK), 540–563 (IDETDELHIHESSFKGMHNLLFLK), 587–609 (PSRLRLLRFDRYPSKCLPSNFHP), 610–632 (ENLVKLQMQQSKLEKLWDGVHSL), 633–656 (AGLRNMDLRGSRNLKEIPDLSMAT), 658–679 (LETLKLSSCSSLVELPSSIQYL), 680–704 (NKLNDLDMSYCDHLETIPSGVNLKS), 766–790 (SPTLTRLTFSNNPSFVEVPSSIQNL), 791–813 (YQLEHLEIMNCRNLVTLPTGINL), 814–834 (DSLISLDLSHCSQLKTFPDIS), and 835–857 (TNISDLNLSYTAIEEVPLSIEKL).

In terms of assembly, interacts with EDS1. As to expression, ubiquitous.

The catalysed reaction is NAD(+) + H2O = ADP-D-ribose + nicotinamide + H(+). In terms of biological role, disease resistance (R) protein that specifically recognizes the hopA1 type III effector avirulence protein from Pseudomonas syringae. Resistance proteins guard the plant against pathogens that contain an appropriate avirulence protein via an indirect interaction with this avirulence protein. That triggers a defense system including the hypersensitive response, which restricts the pathogen growth. This is Disease resistance protein RPS6 (RPS6) from Arabidopsis thaliana (Mouse-ear cress).